The following is a 1435-amino-acid chain: DNA polymerase III PolC-type (1435 aa).

The 157-residue stretch at 420 to 576 (YVVFDVETTG…YDTEATAYIF (157 aa)) folds into the Exonuclease domain.

Belongs to the DNA polymerase type-C family. PolC subfamily.

The protein resides in the cytoplasm. It carries out the reaction DNA(n) + a 2'-deoxyribonucleoside 5'-triphosphate = DNA(n+1) + diphosphate. Its function is as follows. Required for replicative DNA synthesis. This DNA polymerase also exhibits 3' to 5' exonuclease activity. The polypeptide is DNA polymerase III PolC-type (Staphylococcus aureus).